Consider the following 275-residue polypeptide: MGGPGLYSGIGKKAKDLLYRDYQTDHKFTLTTYTANGPAITATSTKKADLTVGEIQSQIKNKNITVDVKANSASNVITTITADDLAAPGLKTILSFAVPDQKSGKVELQYLHDYAGINASIGLTANPVVNLSGAFGTSALAVGADVSLDTATKNFAKYNAALSYTNQDLIASLNLNNKGDSLTASYYHIVEKSGTAVGAELTHSFSSNENSLTFGTQHTLDPLTLVKARINNSGKASALIQHEFMPKSLCTISAEVDTKAIEKSSKVGIAIALKP.

Belongs to the eukaryotic mitochondrial porin (TC 1.B.8.1) family.

It localises to the mitochondrion outer membrane. Its function is as follows. Forms a channel through the cell membrane that allows diffusion of small hydrophilic molecules. The channel adopts an open conformation at low or zero membrane potential and a closed conformation at potentials above 30-40 mV. The open state has a weak anion selectivity whereas the closed state is cation-selective. The protein is Mitochondrial outer membrane porin (VDAC1) of Triticum aestivum (Wheat).